The following is a 553-amino-acid chain: Putative transport protein ASA_0825 (553 aa).

A run of 5 helical transmembrane segments spans residues 4-24 (IALS…LGNW), 29-49 (VGLG…FAGV), 65-85 (FGLI…FFSS), 95-115 (GFAA…HQLF), and 158-178 (MGYA…MWLV). 2 RCK C-terminal domains span residues 191 to 276 (DLFE…VLGE) and 279 to 361 (ETSL…VVGN). 6 helical membrane-spanning segments follow: residues 371 to 391 (MLPV…PFYL), 403 to 425 (AGGP…LYWF), 439 to 459 (IVLF…DTLI), 465 to 485 (AWMM…GVLA), 493 to 513 (YLTL…LAFA), and 533 to 553 (LVMF…WAGV).

This sequence belongs to the AAE transporter (TC 2.A.81) family. YidE subfamily.

It is found in the cell membrane. The protein is Putative transport protein ASA_0825 of Aeromonas salmonicida (strain A449).